The primary structure comprises 142 residues: Cytochrome b5-related protein (142 aa).

Residues 16–100 (PTYRNSAPVT…IAKYKVRDAY (85 aa)) enclose the Cytochrome b5 heme-binding domain. Residues His59 and His82 each contribute to the heme site.

It belongs to the cytochrome b5 family.

In terms of biological role, may play a role in muscle cell metabolism. In Drosophila virilis (Fruit fly), this protein is Cytochrome b5-related protein (Cyt-b5-r).